The sequence spans 382 residues: MLSDEQLIKIRRHLHANPEIGMQEVKTHQFLLEQIAKFPQENLTIETISEIPTALLVRIAGSDPKRTIALRTDMDALPIQEETGLDFASKNDHVMHACGHDIHMTVALGILSYFAKHQPKDNLLVFFQPAEENEFGGKRFYDAGGFQGEYLPDEFYALHVNPQLPAGQIASRKGTLFAGSNELRISFIGKSGHAAYPQNAKDSIVAAANFVTNVQTVVSRNVDPIEGGVVTIGKFNAGKAMNIIAGKADIEGTIRSFTQSGMEIMTKHIRMIAEGIAGAFGQELKINFRQGGYMPVVNDERTTNFFIDYMKNADGVDFKIVQPAMIAEDFGFLSNQFEGTMCWLGVNDPKHSLHSDHLNPDESAITKGVEAIKGFLIARMQK.

Asp73 is a catalytic residue. Glu132 (proton acceptor) is an active-site residue.

The protein belongs to the peptidase M20A family. N-acetyldiaminopimelate deacetylase subfamily.

The catalysed reaction is N-acetyl-(2S,6S)-2,6-diaminopimelate + H2O = (2S,6S)-2,6-diaminopimelate + acetate. It participates in amino-acid biosynthesis; L-lysine biosynthesis via DAP pathway; LL-2,6-diaminopimelate from (S)-tetrahydrodipicolinate (acetylase route): step 3/3. Its function is as follows. Catalyzes the conversion of N-acetyl-diaminopimelate to diaminopimelate and acetate. The chain is N-acetyldiaminopimelate deacetylase from Oenococcus oeni (strain ATCC BAA-331 / PSU-1).